The chain runs to 1027 residues: 2-oxoglutarate dehydrogenase, mitochondrial (1027 aa).

Thiamine diphosphate-binding residues include R315, D413, N446, I448, and Q674. Mg(2+) contacts are provided by D413, N446, and I448.

It belongs to the alpha-ketoglutarate dehydrogenase family. Homodimer. Component of the 2-oxoglutarate dehydrogenase complex. It depends on thiamine diphosphate as a cofactor. Mg(2+) is required as a cofactor.

The protein localises to the mitochondrion matrix. The catalysed reaction is N(6)-[(R)-lipoyl]-L-lysyl-[protein] + 2-oxoglutarate + H(+) = N(6)-[(R)-S(8)-succinyldihydrolipoyl]-L-lysyl-[protein] + CO2. The 2-oxoglutarate dehydrogenase complex catalyzes the overall conversion of 2-oxoglutarate to succinyl-CoA and CO(2). It contains multiple copies of three enzymatic components: 2-oxoglutarate dehydrogenase (E1), dihydrolipoamide succinyltransferase (E2) and lipoamide dehydrogenase (E3). This chain is 2-oxoglutarate dehydrogenase, mitochondrial (ogdh-1), found in Caenorhabditis briggsae.